Reading from the N-terminus, the 228-residue chain is MDRAVSTTTNAVEWAKAPGLTDYPSALAEMQARAAAIRAGEEAERVWLVEHPPLYTAGTSARDADLLHPGDAQVFRSGRGGQWTYHGPGQRVAYVMLDLSRPHGRVPARDVRGFVAGLEAWLIDTLAGFGVRGELREGRVGIWVANPLGGESKIAAIGVRVSRWVSYHGIALNVAPDLGRFGGIVPCGISEHGVTSLAALGVAATLDAVDAALARSFERVFDAAPQPV.

The region spanning 40–225 (GEEAERVWLV…SFERVFDAAP (186 aa)) is the BPL/LPL catalytic domain. Residues 79–86 (RGGQWTYH), 156–158 (AIG), and 169–171 (GIA) each bind substrate. Residue C187 is the Acyl-thioester intermediate of the active site.

The protein belongs to the LipB family.

The protein resides in the cytoplasm. The catalysed reaction is octanoyl-[ACP] + L-lysyl-[protein] = N(6)-octanoyl-L-lysyl-[protein] + holo-[ACP] + H(+). It functions in the pathway protein modification; protein lipoylation via endogenous pathway; protein N(6)-(lipoyl)lysine from octanoyl-[acyl-carrier-protein]: step 1/2. In terms of biological role, catalyzes the transfer of endogenously produced octanoic acid from octanoyl-acyl-carrier-protein onto the lipoyl domains of lipoate-dependent enzymes. Lipoyl-ACP can also act as a substrate although octanoyl-ACP is likely to be the physiological substrate. The sequence is that of Octanoyltransferase from Acidiphilium cryptum (strain JF-5).